A 111-amino-acid polypeptide reads, in one-letter code: Small ribosomal subunit protein bS16 (111 aa).

This sequence belongs to the bacterial ribosomal protein bS16 family.

The chain is Small ribosomal subunit protein bS16 from Rickettsia felis (strain ATCC VR-1525 / URRWXCal2) (Rickettsia azadi).